Consider the following 130-residue polypeptide: Putative F-box protein At1g77880 (130 aa).

The region spanning 18-64 (KVSIPYLPDDLLLNCLARISRLYYPTLSLVSKRFRSLLASTELYETR) is the F-box domain.

The chain is Putative F-box protein At1g77880 from Arabidopsis thaliana (Mouse-ear cress).